The chain runs to 315 residues: FQVCHSLGGGTGSGMGTLLISKIREEYPDRMMLTFSVFPSPKVSDTVVEPYNATLSVHQLVENADVCMVLDNEALYDICFRTLKLTTPSFGDLNHLISATMSGVTCSLRFPGQLNSDLRKLAVILIPFPRLHFFMVGFAPLTSRGSQQYRSLSVPELTQQMWDSKNMMCAADPRHGRYLTASAMFREKMSTKDLDEQMINVQNKNSSYFVEWIPNNVKSTVCDIPPTGLKMASTFIGNSTSIQEMFRRVSEQFTAMFRRKAFLHWYTGEGMDEMEFTEAESNMNDLVSEYQQYQDATADEEEYYEDEEEEEAQGM.

GTP-binding residues include S6, G10, T11, G12, N72, and N94. Positions D295–M315 are disordered. Residues T297–M315 show a composition bias toward acidic residues.

The protein belongs to the tubulin family. As to quaternary structure, dimer of alpha and beta chains. A typical microtubule is a hollow water-filled tube with an outer diameter of 25 nm and an inner diameter of 15 nM. Alpha-beta heterodimers associate head-to-tail to form protofilaments running lengthwise along the microtubule wall with the beta-tubulin subunit facing the microtubule plus end conferring a structural polarity. Microtubules usually have 13 protofilaments but different protofilament numbers can be found in some organisms and specialized cells. Mg(2+) serves as cofactor.

The protein resides in the cytoplasm. The protein localises to the cytoskeleton. In terms of biological role, tubulin is the major constituent of microtubules, a cylinder consisting of laterally associated linear protofilaments composed of alpha- and beta-tubulin heterodimers. Microtubules grow by the addition of GTP-tubulin dimers to the microtubule end, where a stabilizing cap forms. Below the cap, tubulin dimers are in GDP-bound state, owing to GTPase activity of alpha-tubulin. In Daucus carota (Wild carrot), this protein is Tubulin beta-1 chain (TUBB1).